Here is a 200-residue protein sequence, read N- to C-terminus: Inner membrane-spanning protein YciB (200 aa).

The next 6 membrane-spanning stretches (helical) occupy residues 7–27 (HPLFKLATELGPLIVFFFVNA), 32–52 (FAATGAFMVAIIAALIASYVV), 56–76 (IPLMALVTAVVVIVFGTLTLV), 93–113 (LFAAVLGGGLVFNRSFIAIMF), 126–146 (ILTFRWALFFAGMAVLNEIIW), and 153–173 (FWVGFKAFGVLPLTMIFAIAQ).

Belongs to the YciB family.

The protein localises to the cell inner membrane. Plays a role in cell envelope biogenesis, maintenance of cell envelope integrity and membrane homeostasis. This chain is Inner membrane-spanning protein YciB, found in Bradyrhizobium sp. (strain ORS 278).